Here is a 547-residue protein sequence, read N- to C-terminus: Dihydroxy-acid dehydratase (547 aa).

Residue Asp78 coordinates Mg(2+). Cys119 lines the [2Fe-2S] cluster pocket. Mg(2+) contacts are provided by Asp120 and Lys121. Lys121 carries the post-translational modification N6-carboxylysine. Cys191 contacts [2Fe-2S] cluster. Mg(2+) is bound at residue Glu439. Ser464 acts as the Proton acceptor in catalysis.

The protein belongs to the IlvD/Edd family. As to quaternary structure, homodimer. [2Fe-2S] cluster serves as cofactor. Requires Mg(2+) as cofactor.

It carries out the reaction (2R)-2,3-dihydroxy-3-methylbutanoate = 3-methyl-2-oxobutanoate + H2O. The enzyme catalyses (2R,3R)-2,3-dihydroxy-3-methylpentanoate = (S)-3-methyl-2-oxopentanoate + H2O. It participates in amino-acid biosynthesis; L-isoleucine biosynthesis; L-isoleucine from 2-oxobutanoate: step 3/4. Its pathway is amino-acid biosynthesis; L-valine biosynthesis; L-valine from pyruvate: step 3/4. Its function is as follows. Functions in the biosynthesis of branched-chain amino acids. Catalyzes the dehydration of (2R,3R)-2,3-dihydroxy-3-methylpentanoate (2,3-dihydroxy-3-methylvalerate) into 2-oxo-3-methylpentanoate (2-oxo-3-methylvalerate) and of (2R)-2,3-dihydroxy-3-methylbutanoate (2,3-dihydroxyisovalerate) into 2-oxo-3-methylbutanoate (2-oxoisovalerate), the penultimate precursor to L-isoleucine and L-valine, respectively. The polypeptide is Dihydroxy-acid dehydratase (Archaeoglobus fulgidus (strain ATCC 49558 / DSM 4304 / JCM 9628 / NBRC 100126 / VC-16)).